A 240-amino-acid polypeptide reads, in one-letter code: 4-hydroxy-tetrahydrodipicolinate reductase (240 aa).

NAD(+) is bound by residues 79 to 81 (ATT) and 103 to 106 (SANM). H135 functions as the Proton donor/acceptor in the catalytic mechanism. H136 lines the (S)-2,3,4,5-tetrahydrodipicolinate pocket. K139 functions as the Proton donor in the catalytic mechanism. Position 145–146 (145–146 (GT)) interacts with (S)-2,3,4,5-tetrahydrodipicolinate.

This sequence belongs to the DapB family.

Its subcellular location is the cytoplasm. The enzyme catalyses (S)-2,3,4,5-tetrahydrodipicolinate + NAD(+) + H2O = (2S,4S)-4-hydroxy-2,3,4,5-tetrahydrodipicolinate + NADH + H(+). The catalysed reaction is (S)-2,3,4,5-tetrahydrodipicolinate + NADP(+) + H2O = (2S,4S)-4-hydroxy-2,3,4,5-tetrahydrodipicolinate + NADPH + H(+). It participates in amino-acid biosynthesis; L-lysine biosynthesis via DAP pathway; (S)-tetrahydrodipicolinate from L-aspartate: step 4/4. Its function is as follows. Catalyzes the conversion of 4-hydroxy-tetrahydrodipicolinate (HTPA) to tetrahydrodipicolinate. This Staphylococcus aureus (strain bovine RF122 / ET3-1) protein is 4-hydroxy-tetrahydrodipicolinate reductase.